The sequence spans 146 residues: UPF0260 protein Sden_1632 (146 aa).

The protein belongs to the UPF0260 family.

The protein is UPF0260 protein Sden_1632 of Shewanella denitrificans (strain OS217 / ATCC BAA-1090 / DSM 15013).